The sequence spans 239 residues: Ribosomal RNA small subunit methyltransferase G (239 aa).

S-adenosyl-L-methionine contacts are provided by residues glycine 105, leucine 110, 156–157, and arginine 169; that span reads VE.

Belongs to the methyltransferase superfamily. RNA methyltransferase RsmG family.

The protein resides in the cytoplasm. The enzyme catalyses guanosine(527) in 16S rRNA + S-adenosyl-L-methionine = N(7)-methylguanosine(527) in 16S rRNA + S-adenosyl-L-homocysteine. Specifically methylates the N7 position of guanine in position 527 of 16S rRNA. The sequence is that of Ribosomal RNA small subunit methyltransferase G from Verminephrobacter eiseniae (strain EF01-2).